A 467-amino-acid chain; its full sequence is Glutamate--tRNA ligase (467 aa).

The 'HIGH' region motif lies at 9-19 (PSPTGNLHIGS). The 'KMSKS' region signature appears at 237-241 (KISKR). Residue lysine 240 participates in ATP binding.

It belongs to the class-I aminoacyl-tRNA synthetase family. Glutamate--tRNA ligase type 1 subfamily. Monomer.

The protein localises to the cytoplasm. It carries out the reaction tRNA(Glu) + L-glutamate + ATP = L-glutamyl-tRNA(Glu) + AMP + diphosphate. Catalyzes the attachment of glutamate to tRNA(Glu) in a two-step reaction: glutamate is first activated by ATP to form Glu-AMP and then transferred to the acceptor end of tRNA(Glu). The chain is Glutamate--tRNA ligase from Buchnera aphidicola subsp. Acyrthosiphon pisum (strain APS) (Acyrthosiphon pisum symbiotic bacterium).